The primary structure comprises 110 residues: PTS system oligo-beta-mannoside-specific EIIA component (110 aa).

The 99-residue stretch at 9–107 folds into the PTS EIIA type-3 domain; it reads LTDEQISFQL…VKEMLDLFKT (99 aa). The active-site Tele-phosphohistidine intermediate is H83. At H83 the chain carries Phosphohistidine; by HPr.

It is found in the cytoplasm. Functionally, the phosphoenolpyruvate-dependent sugar phosphotransferase system (sugar PTS), a major carbohydrate active transport system, catalyzes the phosphorylation of incoming sugar substrates concomitantly with their translocation across the cell membrane. The enzyme II GmuABC PTS system is involved in the transport of oligo-glucomannans such as cellobiose or mannobiose. The protein is PTS system oligo-beta-mannoside-specific EIIA component of Bacillus subtilis (strain 168).